A 245-amino-acid chain; its full sequence is MLKSASPMAFYDIGEQQYSTFGYILSKPGNAGAYEIDPSIPNIDDAIYGSDEFRMYAYKIKRCPRTRSHDWTECPYAHRGEKATRRDPRRYTYCAVACPAFRNGACHRGDSCEFAHGVFEYWLHPARYRTRACNAGNLCQRKVCFFAHAPEQLRQSEGKHRCRYAYRPVRARGGGNGDGVTMRMDDEGYDTSRSPVRSGKDDLDSNEEKVLLKCWSRMSIVDDHYEPSDLDLDLSHFDWISELVD.

The segment at 92-119 (TYCAVACPAFRNGACHRGDSCEFAHGVF) adopts a C3H1-type zinc-finger fold. Residues 175 to 204 (GNGDGVTMRMDDEGYDTSRSPVRSGKDDLD) form a disordered region.

Interacts with MARD1/FLZ9 and RD21A. In terms of tissue distribution, specifically expressed in embryo (at protein level).

Its subcellular location is the nucleus. Embryo-specific transcription factor required at the globular to heart stage transition in embryo development. The polypeptide is Zinc finger CCCH domain-containing protein 54 (Arabidopsis thaliana (Mouse-ear cress)).